Reading from the N-terminus, the 211-residue chain is Peroxiredoxin (211 aa).

The region spanning 2–156 (PLLGDDFPEL…ILRAVKVLQI (155 aa)) is the Thioredoxin domain. C44 functions as the Cysteine sulfenic acid (-SOH) intermediate in the catalytic mechanism. Residue R119 coordinates substrate. A disulfide bond links C199 and C205.

It belongs to the peroxiredoxin family. Prx6 subfamily. Homodecamer. Pentamer of dimers that assemble into a ring structure.

It localises to the cytoplasm. The catalysed reaction is a hydroperoxide + [thioredoxin]-dithiol = an alcohol + [thioredoxin]-disulfide + H2O. Functionally, thiol-specific peroxidase that catalyzes the reduction of hydrogen peroxide and organic hydroperoxides to water and alcohols, respectively. Plays a role in cell protection against oxidative stress by detoxifying peroxides. The polypeptide is Peroxiredoxin (Chlorobaculum tepidum (strain ATCC 49652 / DSM 12025 / NBRC 103806 / TLS) (Chlorobium tepidum)).